A 115-amino-acid polypeptide reads, in one-letter code: NADH-ubiquinone oxidoreductase chain 3 (115 aa).

Transmembrane regions (helical) follow at residues 3–23 (LLLT…IAFW), 55–75 (FFLV…LLPL), and 84–104 (LNTM…SLAY).

It belongs to the complex I subunit 3 family. In terms of assembly, core subunit of respiratory chain NADH dehydrogenase (Complex I) which is composed of 45 different subunits. Interacts with TMEM186. Interacts with TMEM242.

It is found in the mitochondrion inner membrane. It carries out the reaction a ubiquinone + NADH + 5 H(+)(in) = a ubiquinol + NAD(+) + 4 H(+)(out). Functionally, core subunit of the mitochondrial membrane respiratory chain NADH dehydrogenase (Complex I) which catalyzes electron transfer from NADH through the respiratory chain, using ubiquinone as an electron acceptor. Essential for the catalytic activity of complex I. The polypeptide is NADH-ubiquinone oxidoreductase chain 3 (Balaenoptera musculus (Blue whale)).